Here is a 265-residue protein sequence, read N- to C-terminus: Insulin-like growth factor-binding protein 2-B (265 aa).

The first 17 residues, 1-17 (MSLALLCSLLLVHGSLG), serve as a signal peptide directing secretion. The IGFBP N-terminal domain occupies 19 to 99 (IVFRCPSCTA…IQGLGRCENK (81 aa)). 6 cysteine pairs are disulfide-bonded: Cys23-Cys49, Cys26-Cys51, Cys34-Cys52, Cys41-Cys55, Cys63-Cys76, and Cys70-Cys96. Over residues 107–122 (TNQESAAHSGEVNGTR) the composition is skewed to polar residues. Disordered regions lie at residues 107-128 (TNQESAAHSGEVNGTRSPPMKK) and 144-170 (HHNNKRTRMYNTQDDPKTPHPKQSQCQ). The region spanning 166–248 (QSQCQQELDK…SDKVRGDPNC (83 aa)) is the Thyroglobulin type-1 domain. 3 disulfide bridges follow: Cys169–Cys203, Cys214–Cys225, and Cys227–Cys248. The disordered stretch occupies residues 238-265 (SSDKVRGDPNCSQYYGGPELEPPTAQQK). The short motif at 243–245 (RGD) is the Cell attachment site element.

As to quaternary structure, interacts with igf2. Interacts with igf1. As to expression, in early embryos, expressed at a low level in most tissues with expression becoming abundant in the liver by 96 hours post-fertilization (hpf). The expression pattern in adults exhibits sexual dimorphism; in adult males expression is limited exclusively to the liver whereas in adult females expression is observed in the liver and other tissues including the gut, kidney, ovary and muscle.

The protein localises to the secreted. IGF-binding proteins prolong the half-life of the IGFs and have been shown to either inhibit or stimulate the growth promoting effects of the IGFs on cell culture. They alter the interaction of IGFs with their cell surface receptors. This Danio rerio (Zebrafish) protein is Insulin-like growth factor-binding protein 2-B.